Consider the following 354-residue polypeptide: Rhodopsin (354 aa).

Residues 1-36 lie on the Extracellular side of the membrane; it reads MNGTEGPAFYVPMSNATGVVRSPYEYPQYYLVAPWA. Residues Asn-2 and Asn-15 are each glycosylated (N-linked (GlcNAc...) asparagine). The helical transmembrane segment at 37-61 threads the bilayer; the sequence is YGLLAAYMFFLIITGFPVNFLTLYV. The Cytoplasmic segment spans residues 62–73; the sequence is TIEHKKLRTPLN. A helical membrane pass occupies residues 74–96; it reads YILLNLAIADLFMVFGGFTTTMY. Topologically, residues 97 to 110 are extracellular; that stretch reads TSLHGYFVFGRLGC. An intrachain disulfide couples Cys-110 to Cys-187. The helical transmembrane segment at 111–133 threads the bilayer; sequence NLEGFFATLGGEMGLWSLVVLAI. A 'Ionic lock' involved in activated form stabilization motif is present at residues 134-136; it reads ERW. At 134–152 the chain is on the cytoplasmic side; it reads ERWMVVCKPVSNFRFGENH. A helical membrane pass occupies residues 153 to 173; it reads AIMGVAFTWVMACSCAVPPLV. The Extracellular portion of the chain corresponds to 174–202; sequence GWSRYIPEGMQCSCGVDYYTRTPGVNNES. N-linked (GlcNAc...) asparagine glycosylation is present at Asn-200. A helical transmembrane segment spans residues 203–224; sequence FVIYMFIVHFFIPLIVIFFCYG. Topologically, residues 225–252 are cytoplasmic; the sequence is RLVCTVKEAAAQQQESETTQRAEREVTR. A helical membrane pass occupies residues 253–274; sequence MVIIMVIAFLICWLPYAGVAWY. Topologically, residues 275–286 are extracellular; it reads IFTHQGSEFGPV. A helical membrane pass occupies residues 287–308; that stretch reads FMTLPAFFAKTSAVYNPCIYIC. Lys-296 bears the N6-(retinylidene)lysine mark. Topologically, residues 309–354 are cytoplasmic; the sequence is MNKQFRHCMITTLCCGKNPFEEEEGASTTASKTEASSVSSSSVSPA. Positions 333 to 354 are disordered; sequence GASTTASKTEASSVSSSSVSPA. The span at 334 to 354 shows a compositional bias: low complexity; that stretch reads ASTTASKTEASSVSSSSVSPA.

It belongs to the G-protein coupled receptor 1 family. Opsin subfamily. In terms of processing, phosphorylated on some or all of the serine and threonine residues present in the C-terminal region. Post-translationally, contains one covalently linked retinal chromophore. Retinal rod photoreceptor cells, predominantly in the outer segments (at protein level). Retinal rod photoreceptor cells.

The protein resides in the membrane. The protein localises to the cell projection. Its subcellular location is the cilium. It is found in the photoreceptor outer segment. Its function is as follows. Photoreceptor required for image-forming vision at low light intensity. While most salt water fish species use retinal as chromophore, most freshwater fish use 3-dehydroretinal, or a mixture of retinal and 3-dehydroretinal. Light-induced isomerization of 11-cis to all-trans retinal triggers a conformational change that activates signaling via G-proteins. Subsequent receptor phosphorylation mediates displacement of the bound G-protein alpha subunit by arrestin and terminates signaling. The protein is Rhodopsin (rho) of Danio rerio (Zebrafish).